The primary structure comprises 177 residues: Coatomer subunit zeta-1 (177 aa).

This sequence belongs to the adaptor complexes small subunit family. As to quaternary structure, oligomeric complex that consists of at least the alpha, beta, beta', gamma, delta, epsilon and zeta subunits.

It localises to the cytoplasm. Its subcellular location is the golgi apparatus membrane. It is found in the cytoplasmic vesicle. The protein resides in the COPI-coated vesicle membrane. Functionally, the coatomer is a cytosolic protein complex that binds to dilysine motifs and reversibly associates with Golgi non-clathrin-coated vesicles, which further mediate biosynthetic protein transport from the ER, via the Golgi up to the trans Golgi network. Coatomer complex is required for budding from Golgi membranes, and is essential for the retrograde Golgi-to-ER transport of dilysine-tagged proteins. The zeta subunit may be involved in regulating the coat assembly and, hence, the rate of biosynthetic protein transport due to its association-dissociation properties with the coatomer complex. This chain is Coatomer subunit zeta-1 (COPZ1), found in Oryza sativa subsp. japonica (Rice).